We begin with the raw amino-acid sequence, 556 residues long: DNA ligase B (556 aa).

The active-site N6-AMP-lysine intermediate is Lys-126.

This sequence belongs to the NAD-dependent DNA ligase family. LigB subfamily.

The enzyme catalyses NAD(+) + (deoxyribonucleotide)n-3'-hydroxyl + 5'-phospho-(deoxyribonucleotide)m = (deoxyribonucleotide)n+m + AMP + beta-nicotinamide D-nucleotide.. In terms of biological role, catalyzes the formation of phosphodiester linkages between 5'-phosphoryl and 3'-hydroxyl groups in double-stranded DNA using NAD as a coenzyme and as the energy source for the reaction. This Stutzerimonas stutzeri (strain A1501) (Pseudomonas stutzeri) protein is DNA ligase B.